The primary structure comprises 3013 residues: Genome polyprotein (3013 aa).

An N-acetylserine; by host modification is found at Ser-2. An interaction with STAT1 region spans residues 2-23 (STLPKPQKRNQRNTNRRPQDVK). The segment at 2-58 (STLPKPQKRNQRNTNRRPQDVKFPGGGQIVGGVYLLPRRGPRLGVRATRKTSERSQP) is interaction with EIF2AK2/PKR. The interaction with DDX3X stretch occupies residues 2–59 (STLPKPQKRNQRNTNRRPQDVKFPGGGQIVGGVYLLPRRGPRLGVRATRKTSERSQPR). The interval 2–75 (STLPKPQKRN…PKARRQTGRT (74 aa)) is disordered. Topologically, residues 2-168 (STLPKPQKRN…EDGINYATGN (167 aa)) are cytoplasmic. 2 short sequence motifs (nuclear localization signal) span residues 5–13 (PKPQKRNQR) and 38–43 (PRRGPR). The segment covering 7–16 (PQKRNQRNTN) has biased composition (basic residues). Positions 32-47 (GGVYLLPRRGPRLGVR) are enriched in low complexity. Position 53 is a phosphoserine; by host (Ser-53). 2 consecutive short sequence motifs (nuclear localization signal) follow at residues 58-64 (PRGRRQP) and 66-71 (PKARRQ). A compositionally biased stretch (basic residues) spans 58 to 72 (PRGRRQPIPKARRQT). 2 positions are modified to phosphoserine; by host: Ser-99 and Ser-116. The interval 112–152 (PRRRSRNLGKVIDTLTCGFADLMGYIPVVGAPLGGVAAALA) is important for endoplasmic reticulum and mitochondrial localization. An interaction with APOA2 region spans residues 122 to 173 (VIDTLTCGFADLMGYIPVVGAPLGGVAAALAHGVRAVEDGINYATGNLPGCS). The tract at residues 164–167 (YATG) is important for lipid droplets localization. Residues 169–189 (LPGCSFSIFLLALLSCLTTPA) form a helical membrane-spanning segment. Residues 178-191 (LLALLSCLTTPASA) constitute a propeptide, ER anchor for the core protein, removed in mature form by host signal peptidase. At 190–358 (SAVHYANKSG…TGGHWGILAG (169 aa)) the chain is on the lumenal side. N-linked (GlcNAc...) asparagine; by host glycans are attached at residues Asn-196, Asn-209, Asn-234, and Asn-250. An important for fusion region spans residues 265–296 (MVGAAAFCSAMYVGDLCGGIFLVGQLFSFNPR). An N-linked (GlcNAc...) asparagine; by host glycan is attached at Asn-305. A helical membrane pass occupies residues 359-379 (ILYYSMVANWAKVLCILFLFA). Topologically, residues 380–723 (GVDATTRTTG…WEYVVLAFLL (344 aa)) are lumenal. Residues 385 to 412 (TRTTGAQAARATLGFTGLFQTGAKQNIH) are HVR1. Residues Asn-417, Asn-423, and Asn-430 are each glycosylated (N-linked (GlcNAc...) (high mannose) asparagine; by host). Cystine bridges form between Cys-429-Cys-553, Cys-452-Cys-459, Cys-487-Cys-495, and Cys-504-Cys-509. N-linked (GlcNAc...) asparagine; by host glycosylation occurs at Asn-448. The segment at 475 to 479 (ANVSG) is HVR2. N-linked (GlcNAc...) asparagine; by host glycosylation occurs at Asn-476. The interval 481-494 (SEDRPYCWHYAPRP) is CD81-binding 1. Residue Asn-533 is glycosylated (N-linked (GlcNAc...) asparagine; by host). Residues 545–552 (PPAGAWYG) are CD81-binding 2. Asn-557 carries an N-linked (GlcNAc...) asparagine; by host glycan. Cystine bridges form between Cys-565–Cys-570, Cys-579–Cys-583, Cys-595–Cys-618, and Cys-605–Cys-642. N-linked (GlcNAc...) (high mannose) asparagine; by host glycans are attached at residues Asn-621 and Asn-643. A disulfide bridge links Cys-650 with Cys-675. Residues 658-669 (IEMSPLLFSTTE) form a PKR/eIF2-alpha phosphorylation homology domain (PePHD) region. A helical membrane pass occupies residues 724–744 (LADARICACLWMVLLISQVEA). Topologically, residues 745-755 (ALENLIVLNAA) are lumenal. Residues 756–776 (SAASSQGWIYCLVFICCAWYI) form a helical membrane-spanning segment. Residues 777-780 (KGRV) lie on the Cytoplasmic side of the membrane. A helical transmembrane segment spans residues 781–801 (VPGATYAILHLWPLLLLVLAL). Residues 802–811 (PQRAYAQDRE) lie on the Lumenal side of the membrane. Residues 812 to 832 (QGASIGVVVIAAITIFTLTPA) form a helical membrane-spanning segment. Topologically, residues 833 to 879 (YKTMLVHFLWWNQYFIARSEALIQQWVPSLRVRGGRDAVILLTCLLH) are cytoplasmic. A helical membrane pass occupies residues 880–900 (PSLGFDITKMLLALLGPLYLL). Over 901–926 (QVSLLRVPYYVRAHALLRVCILVRRV) the chain is Lumenal. The Peptidase C18 domain maps to 901–1024 (QVSLLRVPYY…DMKSMGWRLL (124 aa)). Residues 902 to 1204 (VSLLRVPYYV…PVENMETTMR (303 aa)) form a protease NS2-3 region. A lipid anchor (S-palmitoyl cysteine; by host) is attached at Cys-920. A helical transmembrane segment spans residues 927-947 (AGGKYIQAALLKLGAWTGTYI). Residues 927-947 (AGGKYIQAALLKLGAWTGTYI) are interaction with host SCPS1. The Cytoplasmic segment spans residues 948–1655 (YDHLAPLSTW…CMAADLEVIT (708 aa)). Residues His-950, Glu-970, and Cys-991 each act as for protease NS2 activity; shared with dimeric partner in the active site. One can recognise a Peptidase S29 domain in the interval 1025–1206 (APITAYCQQT…ENMETTMRSP (182 aa)). Catalysis depends on charge relay system; for serine protease NS3 activity residues His-1081 and Asp-1105. Zn(2+)-binding residues include Cys-1121 and Cys-1123. Ser-1163 functions as the Charge relay system; for serine protease NS3 activity in the catalytic mechanism. Cys-1169 and His-1173 together coordinate Zn(2+). Residues 1215-1367 (PAVPQTYQVG…PNITETALPS (153 aa)) enclose the Helicase ATP-binding domain. Position 1228–1235 (1228–1235 (APTGSGKS)) interacts with ATP. 2 residues coordinate Mg(2+): Ser-1235 and Glu-1315. The DECH box motif lies at 1314–1317 (DECH). The Helicase C-terminal domain occupies 1374-1536 (YGKAIPLECI…ELTPSETTVR (163 aa)). Residues 1484 to 1496 (QRRGRTGRGKPGV) form an RNA-binding region. The helical transmembrane segment at 1656 to 1676 (STWVLAGGIVAALAAYCLTVG) threads the bilayer. The interval 1677–1688 (SVVICGRIVTSG) is NS3-binding. At 1677 to 1803 (SVVICGRIVT…ALTSPLSTST (127 aa)) the chain is on the cytoplasmic side. Residues 1804–1824 (TLLLNILGGWVASQLAPPTAS) traverse the membrane as a helical segment. The Lumenal portion of the chain corresponds to 1825–1826 (TA). A helical transmembrane segment spans residues 1827-1847 (FVVSGLAGAAVGSIGLGKVII). Residue Asp-1848 is a topological domain, cytoplasmic. The helical transmembrane segment at 1849-1869 (ILAGYGAGVSGALVAFKIMSG) threads the bilayer. Topologically, residues 1870-1879 (EAPAVEDMVN) are lumenal. A helical transmembrane segment spans residues 1880–1900 (LLPALLSPGALVVGVVCAAVL). Residues 1901 to 1970 (RRHVGPSEGA…WISGDWSAPC (70 aa)) lie on the Cytoplasmic side of the membrane. Cys-1970 is lipidated: S-palmitoyl cysteine; by host. Residues 1971 to 2000 (SCSWLKDVWDWVCTVLSDFKTWLRAKLVPT) lie within the membrane without spanning it. Topologically, residues 2001 to 2992 (LPGIPFISCQ…FHSVSRARPR (992 aa)) are cytoplasmic. Zn(2+) is bound by residues Cys-2009, Cys-2027, Cys-2029, and Cys-2050. Positions 2118–2206 (EFFTEVDGVR…ASSSASQLSA (89 aa)) are FKBP8-binding. Residues 2118-2331 (EFFTEVDGVR…PVPPPRKKRV (214 aa)) are transcriptional activation. Positions 2133–2137 (PPCRP) are interaction with non-structural protein 4A. Residues 2187–2440 (RLARGSPPSL…ALITPCAAEE (254 aa)) are interaction with host SKP2. Residues Ser-2192, Ser-2195, Ser-2199, Ser-2202, Ser-2205, and Ser-2208 each carry the phosphoserine; by host modification. Residues 2208 to 2247 (SLKATCTTAGKHPDAELIEANLLWRQEVGGNITRVESENK) are ISDR. Residues 2208–2273 (SLKATCTTAG…REISVGAECF (66 aa)) form an interaction with EIF2AK2/PKR region. Residues 2247 to 2305 (KIIVLDSFDPLIAETDDREISVGAECFNPPRPKFPPALPVWARPDYNPPLLQPWKAPDY) form an NS4B-binding region. Positions 2298-2376 (QPWKAPDYEP…STLSSDMTPP (79 aa)) are V3. Residues 2316 to 2411 (PPKGLPPVPP…PDLSSGSWST (96 aa)) are disordered. The SH3-binding signature appears at 2321-2324 (PPVP). The short motif at 2326 to 2334 (PRKKRVVQL) is the Nuclear localization signal element. Residues 2347 to 2373 (AQTSFPPSTATLSEDSGRETSTLSSDM) show a composition bias toward polar residues. Positions 2375–2385 (PPREEADRASD) are enriched in basic and acidic residues. At Ser-2464 the chain carries Phosphoserine; by host. The RdRp catalytic domain occupies 2636 to 2754 (PMGFSYDTRC…ISESMGVAED (119 aa)). Mg(2+)-binding residues include Asp-2642, Asp-2740, and Asp-2741. Residues 2993-3013 (NLLLCLLLLTVGVGIFLLPAR) traverse the membrane as a helical segment.

It belongs to the hepacivirus polyprotein family. In terms of assembly, homooligomer. Interacts with E1 (via C-terminus). Interacts with the non-structural protein 5A. Interacts (via N-terminus) with host STAT1 (via SH2 domain); this interaction results in decreased STAT1 phosphorylation and ubiquitin-mediated proteasome-dependent STAT1 degradation, leading to decreased IFN-stimulated gene transcription. Interacts with host STAT3; this interaction constitutively activates STAT3. Interacts with host LTBR receptor. Interacts with host TNFRSF1A receptor and possibly induces apoptosis. Interacts with host HNRPK. Interacts with host YWHAE. Interacts with host UBE3A/E6AP. Interacts with host DDX3X. Interacts with host APOA2. Interacts with host RXRA protein. Interacts with host SP110 isoform 3/Sp110b; this interaction sequesters the transcriptional corepressor SP110 away from the nucleus. Interacts with host CREB3 nuclear transcription protein; this interaction triggers cell transformation. Interacts with host ACY3. Interacts with host C1QR1. Interacts with host RBM24; this interaction, which enhances the interaction of the mature core protein with 5'-UTR, may inhibit viral translation and favor replication. Interacts with host EIF2AK2/PKR; this interaction induces the autophosphorylation of EIF2AK2. Part of the viral assembly initiation complex composed of NS2, E1, E2, NS3, NS4A, NS5A and the mature core protein. Forms a heterodimer with envelope glycoprotein E2. Interacts with mature core protein. Interacts with protease NS2. The heterodimer E1/E2 interacts with host CLDN1; this interaction plays a role in viral entry into host cell. Interacts with host SPSB2 (via C-terminus). Part of the viral assembly initiation complex composed of NS2, E1, E2, NS3, NS4A, NS5A and the mature core protein. Interacts with host NEURL3; this interaction prevents E1 binding to glycoprotein E2. As to quaternary structure, forms a heterodimer with envelope glycoprotein E1. Interacts with host CD81 and SCARB1 receptors; these interactions play a role in viral entry into host cell. Interacts with host EIF2AK2/PKR; this interaction inhibits EIF2AK2 and probably allows the virus to evade the innate immune response. Interacts with host CD209/DC-SIGN and CLEC4M/DC-SIGNR. Interact with host SPCS1; this interaction is essential for viral particle assembly. Interacts with protease NS2. The heterodimer E1/E2 interacts with host CLDN1; this interaction plays a role in viral entry into host cell. Part of the viral assembly initiation complex composed of NS2, E1, E2, NS3, NS4A, NS5A and the mature core protein. Interacts with host SLC3A2/4F2hc; the interaction may facilitate viral entry into host cell. Interacts with human PLSCR1. In terms of assembly, homohexamer. Homoheptamer. Interacts with protease NS2. Homodimer. Interacts with host SPCS1; this interaction is essential for viral particle assembly. Interacts with envelope glycoprotein E1. Interacts with envelope glycoprotein E2. Interacts with viroporin p7. Interacts with serine protease/helicase NS3. Part of the replication complex composed of NS2, NS3, NS4A, NS4B, NS5A and the RNA-directed RNA polymerase embedded in an ER-derived membranous web. Part of the viral assembly initiation complex composed of NS2, E1, E2, NS3, NS4A, NS5A and the mature core protein. As to quaternary structure, interacts with protease NS2. Interacts with non-structural protein 4A; this interaction stabilizes the folding of NS3 serine protease. NS3-NS4A interaction is essential for NS3 activation and allows membrane anchorage of the latter. NS3/NS4A complex also prevents phosphorylation of host IRF3, thus preventing the establishment of dsRNA induced antiviral state. Interacts with host MAVS; this interaction leads to the cleavage and inhibition of host MAVS. Interacts with host TICAM1; this interaction leads to the cleavage and inhibition of host TICAM1. Interacts with host TANK-binding kinase/TBK1; this interaction results in the inhibition of the association between TBK1 and IRF3, which leads to the inhibition of IRF3 activation. Interacts with host RBM24. Part of the replication complex composed of NS2, NS3, NS4A, NS4B, NS5A and the RNA-directed RNA polymerase embedded in an ER-derived membranous web. Part of the viral assembly initiation complex composed of NS2, E1, E2, NS3, NS4A, NS5A and the mature core protein. In terms of assembly, interacts with NS3 serine protease; this interaction stabilizes the folding of NS3 serine protease. NS3-NS4A interaction is essential for NS3 activation and allows membrane anchorage of the latter. Interacts with non-structural protein 5A (via N-terminus). Part of the replication complex composed of NS2, NS3, NS4A, NS4B, NS5A and the RNA-directed RNA polymerase embedded in an ER-derived membranous web. Part of the viral assembly initiation complex composed of NS2, E1, E2, NS3, NS4A, NS5A and the mature core protein. Homomultimer. Interacts with non-structural protein NS5A. Interacts with host PLA2G4C; this interaction likely initiates the recruitment of replication complexes to lipid droplets. Interacts with host STING; this interaction disrupts the interaction between STING and TBK1 thereby suppressing the interferon signaling. Part of the replication complex composed of NS2, NS3, NS4A, NS4B, NS5A and the RNA-directed RNA polymerase embedded in an ER-derived membranous web. As to quaternary structure, monomer. Homodimer; dimerization is required for RNA-binding. Interacts with the mature core protein. Interacts (via N-terminus) with non-structural protein 4A. Interacts with non-structural protein 4B. Interacts (via region D2) with RNA-directed RNA polymerase. Part of the viral assembly initiation complex composed of NS2, E1, E2, NS3, NS4A, NS5A and the mature core protein. Part of the replication complex composed of NS2, NS3, NS4A, NS4B, NS5A and the RNA-directed RNA polymerase embedded in an ER-derived membranous web. Interacts with host GRB2. Interacts with host BIN1. Interacts with host PIK3R1. Interacts with host SRCAP. Interacts with host FKBP8. Interacts (via C-terminus) with host VAPB (via MSP domain). Interacts with host EIF2AK2/PKR; this interaction leads to disruption of EIF2AK2 dimerization by NS5A and probably allows the virus to evade the innate immune response. Interacts (via N-terminus) with host PACSIN2 (via N-terminus); this interaction attenuates protein kinase C alpha-mediated phosphorylation of PACSIN2 by disrupting the interaction between PACSIN2 and PRKCA. Interacts (via N-terminus) with host SRC kinase (via SH2 domain). Interacts with most Src-family kinases. Interacts with host IFI27 and SKP2; promotes the ubiquitin-mediated proteasomal degradation of NS5A. Interacts with host GPS2. Interacts with host TNFRSF21; this interaction allows the modulation by the virus of JNK, p38 MAPK, STAT3, and Akt signaling pathways in a DR6-dependent manner. Interacts (via N-terminus) with host CIDEB (via N-terminus); this interaction seems to regulate the association of HCV particles with APOE. Interacts with host CHKA/Choline Kinase-alpha; CHKA bridges host PI4KA and NS5A and potentiates NS5A-stimulated PI4KA activity, which then facilitates the targeting of the ternary complex to the ER for viral replication. Interacts with host SPSB2 (via C-terminus); this interaction targets NS5A for ubiquitination and degradation. Interacts with host RAB18; this interaction may promote the association of NS5A and other replicase components with lipid droplets. Interacts (via region D2) with host PPIA/CYPA; the interaction stimulates RNA-binding ability of NS5A and is dependent on the peptidyl-prolyl cis-trans isomerase activity of PPIA/CYPA. Interacts with host TRIM14; this interaction induces the degradation of NS5A. In terms of assembly, homooligomer. Interacts with non-structural protein 5A. Interacts with host VAPB. Interacts with host PRK2/PKN2. Interacts with host HNRNPA1 and SEPT6; these interactions facilitate viral replication. Part of the replication complex composed of NS2, NS3, NS4A, NS4B, NS5A and the RNA-directed RNA polymerase. It depends on Zn(2+) as a cofactor. Mg(2+) is required as a cofactor. Post-translationally, specific enzymatic cleavages in vivo yield mature proteins. The structural proteins, core, E1, E2 and p7 are produced by proteolytic processing by host signal peptidases. The core protein precursor is synthesized as a 23 kDa, which is retained in the ER membrane through the hydrophobic signal peptide. Cleavage by the signal peptidase releases the 21 kDa mature core protein. The cleavage of the core protein precursor occurs between aminoacids 176 and 188 but the exact cleavage site is not known. Some degraded forms of the core protein appear as well during the course of infection. The other proteins (p7, NS2, NS3, NS4A, NS4B, NS5A and NS5B) are cleaved by the viral proteases. Autoprocessing between NS2 and NS3 is mediated by the NS2 cysteine protease catalytic domain and regulated by the NS3 N-terminal domain. In terms of processing, phosphorylated by host PKC and PKA. Ubiquitinated; mediated by UBE3A and leading to core protein subsequent proteasomal degradation. Post-translationally, highly N-glycosylated. In terms of processing, palmitoylation is required for NS2/3 autoprocessing and E2 recruitment to membranes. Palmitoylated. This modification may play a role in its polymerization or in protein-protein interactions. Post-translationally, phosphorylated on serines in a basal form termed p56. p58 is a hyperphosphorylated form of p56. p56 and p58 coexist in the cell in roughly equivalent amounts. Hyperphosphorylation is dependent on the presence of NS4A. Host CSNK1A1/CKI-alpha or RPS6KB1 kinases may be responsible for NS5A phosphorylation. In terms of processing, tyrosine phosphorylation is essential for the interaction with host SRC. The N-terminus is phosphorylated by host PRK2/PKN2.

The protein localises to the host endoplasmic reticulum membrane. It localises to the host mitochondrion membrane. It is found in the virion. Its subcellular location is the host cytoplasm. The protein resides in the host nucleus. The protein localises to the host lipid droplet. It localises to the virion membrane. It is found in the host mitochondrion. Its subcellular location is the host cell membrane. The protein resides in the host perinuclear region. The catalysed reaction is Hydrolysis of four peptide bonds in the viral precursor polyprotein, commonly with Asp or Glu in the P6 position, Cys or Thr in P1 and Ser or Ala in P1'.. The enzyme catalyses a ribonucleoside 5'-triphosphate + H2O = a ribonucleoside 5'-diphosphate + phosphate + H(+). It catalyses the reaction ATP + H2O = ADP + phosphate + H(+). It carries out the reaction RNA(n) + a ribonucleoside 5'-triphosphate = RNA(n+1) + diphosphate. Its activity is regulated as follows. Inhibited by the antiviral drug hexamethylene amiloride. Inhibition by amantadine appears to be genotype-dependent. Also inhibited by long-alkyl-chain iminosugar derivatives. Activity is up-regulated by PRK2/PKN2-mediated phosphorylation. Functionally, packages viral RNA to form a viral nucleocapsid, and promotes virion budding. Participates in the viral particle production as a result of its interaction with the non-structural protein 5A. Binds RNA and may function as a RNA chaperone to induce the RNA structural rearrangements taking place during virus replication. Modulates viral translation initiation by interacting with viral IRES and 40S ribosomal subunit. Affects various cell signaling pathways, host immunity and lipid metabolism. Prevents the establishment of cellular antiviral state by blocking the interferon-alpha/beta (IFN-alpha/beta) and IFN-gamma signaling pathways and by blocking the formation of phosphorylated STAT1 and promoting ubiquitin-mediated proteasome-dependent degradation of STAT1. Activates STAT3 leading to cellular transformation. Regulates the activity of cellular genes, including c-myc and c-fos. May repress the promoter of p53, and sequester CREB3 and SP110 isoform 3/Sp110b in the cytoplasm. Represses cell cycle negative regulating factor CDKN1A, thereby interrupting an important check point of normal cell cycle regulation. Targets transcription factors involved in the regulation of inflammatory responses and in the immune response: suppresses TNF-induced NF-kappa-B activation, and activates AP-1. Binds to dendritic cells (DCs) via C1QR1, resulting in down-regulation of T-lymphocytes proliferation. Alters lipid metabolism by interacting with hepatocellular proteins involved in lipid accumulation and storage. Induces up-regulation of FAS promoter activity, and thereby contributes to the increased triglyceride accumulation in hepatocytes (steatosis). In terms of biological role, forms a heterodimer with envelope glycoprotein E2, which mediates virus attachment to the host cell, virion internalization through clathrin-dependent endocytosis and fusion with host membrane. Fusion with the host cell is most likely mediated by both E1 and E2, through conformational rearrangements of the heterodimer required for fusion rather than a classical class II fusion mechanism. E1/E2 heterodimer binds host apolipoproteins such as APOB and ApoE thereby forming a lipo-viro-particle (LVP). APOE associated to the LVP allows the initial virus attachment to cell surface receptors such as the heparan sulfate proteoglycans (HSPGs), syndecan-1 (SDC1), syndecan-1 (SDC2), the low-density lipoprotein receptor (LDLR) and scavenger receptor class B type I (SCARB1). The cholesterol transfer activity of SCARB1 allows E2 exposure and binding of E2 to SCARB1 and the tetraspanin CD81. E1/E2 heterodimer binding on CD81 activates the epithelial growth factor receptor (EGFR) signaling pathway. Diffusion of the complex E1-E2-EGFR-SCARB1-CD81 to the cell lateral membrane allows further interaction with Claudin 1 (CLDN1) and occludin (OCLN) to finally trigger HCV entry. Forms a heterodimer with envelope glycoprotein E1, which mediates virus attachment to the host cell, virion internalization through clathrin-dependent endocytosis and fusion with host membrane. Fusion with the host cell is most likely mediated by both E1 and E2, through conformational rearrangements of the heterodimer required for fusion rather than a classical class II fusion mechanism. The interaction between envelope glycoprotein E2 and host apolipoprotein E/APOE allows the proper assembly, maturation and infectivity of the viral particles. This interaction is probably promoted via the up-regulation of cellular autophagy by the virus. E1/E2 heterodimer binds host apolipoproteins such as APOB and APOE thereby forming a lipo-viro-particle (LVP). APOE associated to the LVP allows the initial virus attachment to cell surface receptors such as the heparan sulfate proteoglycans (HSPGs), syndecan-1 (SDC1), syndecan-1 (SDC2), the low-density lipoprotein receptor (LDLR) and scavenger receptor class B type I (SCARB1). The cholesterol transfer activity of SCARB1 allows E2 exposure and binding of E2 to SCARB1 and the tetraspanin CD81. E1/E2 heterodimer binding on CD81 activates the epithelial growth factor receptor (EGFR) signaling pathway. Diffusion of the complex E1-E2-EGFR-SCARB1-CD81 to the cell lateral membrane allows further interaction with Claudin 1 (CLDN1) and occludin (OCLN) to finally trigger HCV entry. Inhibits host EIF2AK2/PKR activation, preventing the establishment of an antiviral state. Viral ligand for CD209/DC-SIGN and CLEC4M/DC-SIGNR, which are respectively found on dendritic cells (DCs), and on liver sinusoidal endothelial cells and macrophage-like cells of lymph node sinuses. These interactions allow the capture of circulating HCV particles by these cells and subsequent facilitated transmission to permissive cells such as hepatocytes and lymphocyte subpopulations. The interaction between E2 and host amino acid transporter complex formed by SLC3A2 and SLC7A5/LAT1 may facilitate viral entry into host cell. Its function is as follows. Ion channel protein that acts as a viroporin and plays an essential role in the assembly, envelopment and secretion of viral particles. Regulates the host cell secretory pathway, which induces the intracellular retention of viral glycoproteins and favors assembly of viral particles. Creates a pore in acidic organelles and releases Ca(2+) and H(+) in the cytoplasm of infected cells, leading to a productive viral infection. High levels of cytoplasmic Ca(2+) may trigger membrane trafficking and transport of viral ER-associated proteins to viroplasms, sites of viral genome replication. This ionic imbalance induces the assembly of the inflammasome complex, which triggers the maturation of pro-IL-1beta into IL-1beta through the action of caspase-1. Targets also host mitochondria and induces mitochondrial depolarization. In addition of its role as a viroporin, acts as a lipid raft adhesion factor. Functionally, cysteine protease required for the proteolytic auto-cleavage between the non-structural proteins NS2 and NS3. The N-terminus of NS3 is required for the function of NS2 protease (active region NS2-3). Promotes the initiation of viral particle assembly by mediating the interaction between structural and non-structural proteins. In terms of biological role, displays three enzymatic activities: serine protease with a chymotrypsin-like fold, NTPase and RNA helicase. NS3 serine protease, in association with NS4A, is responsible for the cleavages of NS3-NS4A, NS4A-NS4B, NS4B-NS5A and NS5A-NS5B. The NS3/NS4A complex prevents phosphorylation of host IRF3, thus preventing the establishment of dsRNA induced antiviral state. The NS3/NS4A complex induces host amino acid transporter component SLC3A2, thus contributing to HCV propagation. NS3 RNA helicase binds to RNA and unwinds both dsDNA and dsRNA in the 3' to 5' direction, and likely resolves RNA complicated stable secondary structures in the template strand. Binds a single ATP and catalyzes the unzipping of a single base pair of dsRNA. Inhibits host antiviral proteins TBK1 and IRF3 thereby preventing the establishment of an antiviral state. Cleaves host MAVS/CARDIF thereby preventing the establishment of an antiviral state. Cleaves host TICAM1/TRIF, thereby disrupting TLR3 signaling and preventing the establishment of an antiviral state. Peptide cofactor which forms a non-covalent complex with the N-terminal of NS3 serine protease. The NS3/NS4A complex prevents phosphorylation of host IRF3, thus preventing the establishment of dsRNA induced antiviral state. The NS3/NS4A complex induces host amino acid transporter component SLC3A2, thus contributing to HCV propagation. Its function is as follows. Induces a specific membrane alteration that serves as a scaffold for the virus replication complex. This membrane alteration gives rise to the so-called ER-derived membranous web that contains the replication complex. NS4B self-interaction contributes to its function in membranous web formation. Promotes host TRIF protein degradation in a CASP8-dependent manner thereby inhibiting host TLR3-mediated interferon signaling. Disrupts the interaction between STING and TBK1 contributing to the inhibition of interferon signaling. Functionally, phosphorylated protein that is indispensable for viral replication and assembly. Both hypo- and hyperphosphorylated states are required for the viral life cycle. The hyperphosphorylated form of NS5A is an inhibitor of viral replication. Involved in RNA-binding and especially in binding to the viral genome. Zinc is essential for RNA-binding. Participates in the viral particle production as a result of its interaction with the mature viral core protein. Its interaction with host VAPB may target the viral replication complex to vesicles. Down-regulates viral IRES translation initiation. Mediates interferon resistance, presumably by interacting with and inhibiting host EIF2AK2/PKR. Prevents BIN1-induced apoptosis. Acts as a transcriptional activator of some host genes important for viral replication when localized in the nucleus. Via the interaction with host PACSIN2, modulates lipid droplet formation in order to promote virion assembly. Modulates TNFRSF21/DR6 signaling pathway for viral propagation. In terms of biological role, RNA-dependent RNA polymerase that performs primer-template recognition and RNA synthesis during viral replication. Initiates RNA transcription/replication at a flavin adenine dinucleotide (FAD), resulting in a 5'- FAD cap on viral RNAs. In this way, recognition of viral 5' RNA by host pattern recognition receptors can be bypassed, thereby evading activation of antiviral pathways. In Hepatitis C virus genotype 6d (isolate VN235) (HCV), this protein is Genome polyprotein.